A 118-amino-acid chain; its full sequence is Large ribosomal subunit protein uL24 (118 aa).

The protein belongs to the universal ribosomal protein uL24 family. As to quaternary structure, part of the 50S ribosomal subunit.

One of two assembly initiator proteins, it binds directly to the 5'-end of the 23S rRNA, where it nucleates assembly of the 50S subunit. Its function is as follows. One of the proteins that surrounds the polypeptide exit tunnel on the outside of the subunit. The chain is Large ribosomal subunit protein uL24 from Synechococcus sp. (strain CC9605).